Consider the following 335-residue polypeptide: Mesoderm-specific transcript homolog protein (335 aa).

The next 3 helical transmembrane spans lie at tryptophan 13–proline 33, isoleucine 88–glycine 108, and valine 266–valine 286. In terms of domain architecture, AB hydrolase-1 spans isoleucine 71–aspartate 310. The RVIALD motif lies at arginine 98–aspartate 103.

This sequence belongs to the AB hydrolase superfamily. In terms of tissue distribution, no detectable transcripts during preimplantation development. Isoform 1 was not detected in either in vitro-matured oocytes (IVF) or parthenogenetically activated (PA) blastocyst. Isoform 2 was expressed in IVF and PA blastocysts.

It localises to the endoplasmic reticulum membrane. This is Mesoderm-specific transcript homolog protein (MEST) from Bos taurus (Bovine).